The sequence spans 379 residues: UDP-4-amino-4-deoxy-L-arabinose--oxoglutarate aminotransferase (379 aa).

Lys182 is modified (N6-(pyridoxal phosphate)lysine).

This sequence belongs to the DegT/DnrJ/EryC1 family. ArnB subfamily. Homodimer. It depends on pyridoxal 5'-phosphate as a cofactor.

The catalysed reaction is UDP-4-amino-4-deoxy-beta-L-arabinose + 2-oxoglutarate = UDP-beta-L-threo-pentopyranos-4-ulose + L-glutamate. It participates in nucleotide-sugar biosynthesis; UDP-4-deoxy-4-formamido-beta-L-arabinose biosynthesis; UDP-4-deoxy-4-formamido-beta-L-arabinose from UDP-alpha-D-glucuronate: step 2/3. The protein operates within bacterial outer membrane biogenesis; lipopolysaccharide biosynthesis. Catalyzes the conversion of UDP-4-keto-arabinose (UDP-Ara4O) to UDP-4-amino-4-deoxy-L-arabinose (UDP-L-Ara4N). The modified arabinose is attached to lipid A and is required for resistance to polymyxin and cationic antimicrobial peptides. This Escherichia fergusonii (strain ATCC 35469 / DSM 13698 / CCUG 18766 / IAM 14443 / JCM 21226 / LMG 7866 / NBRC 102419 / NCTC 12128 / CDC 0568-73) protein is UDP-4-amino-4-deoxy-L-arabinose--oxoglutarate aminotransferase.